The following is a 423-amino-acid chain: Pentamidine resistance factor, mitochondrial (423 aa).

The helical transmembrane segment at 199-219 (PVFFTLVFIFEEVSVLIFTFF) threads the bilayer.

As to quaternary structure, interacts with COX18. This interaction may be essential for its insertion into mitochondrial inner membrane.

It localises to the mitochondrion inner membrane. In terms of biological role, probably involved in mitochondrial export. Confers resistance to the anti-pneumocystis carinii drug pentamidine. May act by the removal of pentamidine, or its damage targets, from the matrix by an active-transport mechanism. In Saccharomyces cerevisiae (strain ATCC 204508 / S288c) (Baker's yeast), this protein is Pentamidine resistance factor, mitochondrial (PNT1).